The chain runs to 227 residues: NAD(P)H-quinone oxidoreductase subunit K, chloroplastic (227 aa).

4 residues coordinate [4Fe-4S] cluster: C43, C44, C108, and C139. The segment covering 173 to 192 (RSFTTNHKFQVGRSSHTGNY) has biased composition (polar residues). The disordered stretch occupies residues 173 to 201 (RSFTTNHKFQVGRSSHTGNYDQGFLSKPP).

This sequence belongs to the complex I 20 kDa subunit family. In terms of assembly, NDH is composed of at least 16 different subunits, 5 of which are encoded in the nucleus. Requires [4Fe-4S] cluster as cofactor.

It localises to the plastid. Its subcellular location is the chloroplast thylakoid membrane. The enzyme catalyses a plastoquinone + NADH + (n+1) H(+)(in) = a plastoquinol + NAD(+) + n H(+)(out). It carries out the reaction a plastoquinone + NADPH + (n+1) H(+)(in) = a plastoquinol + NADP(+) + n H(+)(out). In terms of biological role, NDH shuttles electrons from NAD(P)H:plastoquinone, via FMN and iron-sulfur (Fe-S) centers, to quinones in the photosynthetic chain and possibly in a chloroplast respiratory chain. The immediate electron acceptor for the enzyme in this species is believed to be plastoquinone. Couples the redox reaction to proton translocation, and thus conserves the redox energy in a proton gradient. The sequence is that of NAD(P)H-quinone oxidoreductase subunit K, chloroplastic from Trachelium caeruleum (Blue throatwort).